Consider the following 237-residue polypeptide: Regulator of G-protein signaling 9-binding protein (237 aa).

Over 1–214 the chain is Cytoplasmic; sequence MAKEECKALL…TGPCDLSKAK (214 aa). Coiled-coil stretches lie at residues 29–58 and 144–169; these read GSAD…RLRL and VEDL…MKVN. Positions 153–202 are SNARE-like; sequence EILQVGEMIQDMEMKVNVPRWTVQARQAAGAELLSSASAGVSSVGGVSVE. Residues 215–234 traverse the membrane as a helical; Anchor for type IV membrane protein segment; sequence AATIFSAVLLAAVALAVCVA. Over 235–237 the chain is Extracellular; the sequence is KLS.

This sequence belongs to the RGS7BP/RGS9BP family. As to quaternary structure, specifically interacts with isoform RGS9-1 of RGS9. Component of the RGS9-1-Gbeta5 complex composed of RGS9-1, Gbeta5 (GNB5) and RGS9BP. In terms of tissue distribution, specifically expressed in the retina. Only present in photoreceptors (at protein level).

The protein localises to the membrane. Functionally, regulator of G protein-coupled receptor (GPCR) signaling in phototransduction. Participates in the recovery phase of visual transduction via its interaction with RGS9-1 isoform. Acts as a membrane-anchor that mediates the targeting of RGS9-1 to the photoreceptor outer segment, where phototransduction takes place. Enhances the ability of RGS9-1 to stimulate G protein GTPase activity, allowing the visual signal to be terminated on the physiologically time scale. It also controls the proteolytic stability of RGS9-1, probably by protecting it from degradation. In Bos taurus (Bovine), this protein is Regulator of G-protein signaling 9-binding protein (RGS9BP).